The chain runs to 241 residues: MQTGLYVALSSQMALEKRLNTLADNIANSNTVGFRATEVKFNQVLGDTKPTKVSYVSEGEEFLSTKTGALARTGSALDFAIKGDAWFSIDTPGGPALTRDGRFTLTETGELVTIKGYPVLDAGGAPIQLNGGAGEIAVGADGAIHQNGVQIALLGLYEADFSKGFMRYDNSSVMPAAQPEPVVDRFDVGVMQGFLEESNVNAIQEMSQLIMITRAFDNVTALMRDSEGSLDKAIETLGGSR.

It belongs to the flagella basal body rod proteins family. In terms of assembly, the basal body constitutes a major portion of the flagellar organelle and consists of five rings (E,L,P,S, and M) mounted on a central rod. The rod consists of about 26 subunits of FlgG in the distal portion, and FlgB, FlgC and FlgF are thought to build up the proximal portion of the rod with about 6 subunits each.

It is found in the bacterial flagellum basal body. The protein is Flagellar basal-body rod protein FlgF (flgF) of Rhizobium meliloti (strain 1021) (Ensifer meliloti).